The sequence spans 1311 residues: Ubiquitin carboxyl-terminal hydrolase 36 (1311 aa).

Low complexity-rich tracts occupy residues 120-134 (AAAA…SAGS) and 156-174 (STPT…SSSS). The segment at 120-189 (AAAATNNGNS…NPNELPKPKR (70 aa)) is disordered. Residues 212 to 533 (AGMINVGNTC…NSYIMFYELD (322 aa)) form the USP domain. Cys221 acts as the Nucleophile in catalysis. The active-site Proton acceptor is His492. The tract at residues 546–575 (NGLRQLSNGHHHHQQQQQQHQQQQQQQPTV) is disordered. Residues 560–572 (QQQQQHQQQQQQQ) show a composition bias toward low complexity. Residue Ser581 is modified to Phosphoserine. 3 disordered regions span residues 587–620 (TRFI…GHSQ), 640–1095 (KFQE…GCLN), and 1136–1311 (DHGD…QQQS). 3 stretches are compositionally biased toward low complexity: residues 605–616 (TTTTTATNNTTN), 660–716 (APAV…QQQQ), and 759–774 (TLTL…STPT). Phosphothreonine is present on Thr767. Residues Ser787 and Ser789 each carry the phosphoserine modification. Residues 795–826 (SSGTPSSSTPTTTTTAAAAAASSPMQATAAAT) are compositionally biased toward low complexity. Over residues 836–853 (ARKRSLPDHHHHHPHHHV) the composition is skewed to basic residues. Residues 869-879 (PATNFNSSSSK) are compositionally biased toward polar residues. Over residues 880 to 889 (QKTDAIDEIF) the composition is skewed to basic and acidic residues. A compositionally biased stretch (basic residues) spans 896–905 (NKKRINNKNQ). Acidic residues predominate over residues 910 to 920 (GDEEEDDEETL). 2 stretches are compositionally biased toward low complexity: residues 925–942 (NNSS…PTTN) and 950–979 (VSSS…STSA). A compositionally biased stretch (pro residues) spans 980 to 989 (PPSPKTPPSP). Ser982 bears the Phosphoserine mark. Thr985 is subject to Phosphothreonine. A Phosphoserine modification is found at Ser988. Positions 1006–1020 (DDDDDEEEEDEDDEE) are enriched in acidic residues. The span at 1037–1050 (PFSSQQKPTPSPST) shows a compositional bias: low complexity. A Phosphoserine modification is found at Ser1047. Residue Thr1050 is modified to Phosphothreonine. Positions 1060–1081 (FNGTSSSTPHVGNGYQSEPSTP) are enriched in polar residues. Low complexity-rich tracts occupy residues 1154-1176 (VVTT…TADA) and 1204-1221 (TANG…PGYN). Residues 1246–1255 (QHASSSYRSN) show a composition bias toward polar residues. The segment covering 1267 to 1276 (GGNGGGGSGG) has biased composition (gly residues).

It belongs to the peptidase C19 family. As to quaternary structure, interacts with atms/PAF1, but not with CycT.

The protein localises to the nucleus. It is found in the nucleolus. The enzyme catalyses Thiol-dependent hydrolysis of ester, thioester, amide, peptide and isopeptide bonds formed by the C-terminal Gly of ubiquitin (a 76-residue protein attached to proteins as an intracellular targeting signal).. Required for maintaining multiple types of adult stem cells, including male and female germline, epithelial follicle cell and intestinal stem cells. May function as a transcriptional repressor by continually deubiquiting histone H2B at the promoters of genes critical for cellular differentiation, thereby preventing histone H3 'Lys-4' trimethylation (H3K4). Controls selective autophagy activation by ubiquitinated proteins. In Drosophila willistoni (Fruit fly), this protein is Ubiquitin carboxyl-terminal hydrolase 36 (Usp36).